Here is a 279-residue protein sequence, read N- to C-terminus: Probable nicotinate-nucleotide pyrophosphorylase [carboxylating] (279 aa).

Substrate contacts are provided by residues Arg-90, 125–127, Arg-149, Lys-159, Glu-189, Asp-210, 238–240, and 259–261; these read TRK, SGG, and MGF.

The protein belongs to the NadC/ModD family. Hexamer formed by 3 homodimers.

The enzyme catalyses nicotinate beta-D-ribonucleotide + CO2 + diphosphate = quinolinate + 5-phospho-alpha-D-ribose 1-diphosphate + 2 H(+). Its pathway is cofactor biosynthesis; NAD(+) biosynthesis; nicotinate D-ribonucleotide from quinolinate: step 1/1. Functionally, involved in the catabolism of quinolinic acid (QA). The sequence is that of Probable nicotinate-nucleotide pyrophosphorylase [carboxylating] (nadC) from Methanothermobacter thermautotrophicus (strain ATCC 29096 / DSM 1053 / JCM 10044 / NBRC 100330 / Delta H) (Methanobacterium thermoautotrophicum).